A 143-amino-acid chain; its full sequence is Transcriptional regulator SlyA (143 aa).

One can recognise an HTH marR-type domain in the interval glutamate 2–lysine 135. A DNA-binding region (H-T-H motif) is located at residues glutamine 49 to glutamate 72.

Belongs to the SlyA family. In terms of assembly, homodimer.

Transcription regulator that can specifically activate or repress expression of target genes. This chain is Transcriptional regulator SlyA, found in Yersinia pestis bv. Antiqua (strain Antiqua).